The sequence spans 852 residues: G-type lectin S-receptor-like serine/threonine-protein kinase At4g03230 (852 aa).

The signal sequence occupies residues 1–19; it reads MILSVFFYMFLLHIRRLDC. The Bulb-type lectin domain occupies 20 to 154; it reads FVAVQDSKTL…GNEANVVWQS (135 aa). Over 20 to 444 the chain is Extracellular; that stretch reads FVAVQDSKTL…RGRGRYGEAK (425 aa). Residues asparagine 37, asparagine 59, asparagine 171, asparagine 187, asparagine 234, and asparagine 243 are each glycosylated (N-linked (GlcNAc...) asparagine). The EGF-like domain maps to 285-321; it reads PRDECSVYNACGNFGSCNSKNEEMCKCLPGFRPNFLE. Cystine bridges form between cysteine 289–cysteine 301 and cysteine 295–cysteine 309. The PAN domain maps to 339-426; it reads CGKDGVVVGD…SRNVFIRVAV (88 aa). N-linked (GlcNAc...) asparagine glycosylation is present at asparagine 352. Disulfide bonds link cysteine 373–cysteine 400 and cysteine 377–cysteine 383. Residues 445–465 form a helical membrane-spanning segment; it reads TPVVLIIVVTFTSAAILVVLS. Residues 466–852 are Cytoplasmic-facing; the sequence is STASYVFLQR…ELTITLEDGR (387 aa). Residues 532–819 enclose the Protein kinase domain; sequence FSNANKLGQG…TLPTPKQPAF (288 aa). ATP-binding positions include 538-546 and lysine 560; that span reads LGQGGFGPV. At serine 566 the chain carries Phosphoserine. The interval 621-638 is caM-binding; sequence KLCQRLDWKMRCNIILGI. The active-site Proton acceptor is the aspartate 657. Phosphoserine is present on residues serine 661 and serine 674. At threonine 691 the chain carries Phosphothreonine. The segment at 826–852 is disordered; it reads SSSKASSSTKPETCSENELTITLEDGR. A phosphoserine mark is found at serine 831 and serine 840. Residues 834-845 are compositionally biased toward polar residues; that stretch reads TKPETCSENELT. Residue threonine 847 is modified to Phosphothreonine.

This sequence belongs to the protein kinase superfamily. Ser/Thr protein kinase family.

It is found in the cell membrane. The enzyme catalyses L-seryl-[protein] + ATP = O-phospho-L-seryl-[protein] + ADP + H(+). The catalysed reaction is L-threonyl-[protein] + ATP = O-phospho-L-threonyl-[protein] + ADP + H(+). The polypeptide is G-type lectin S-receptor-like serine/threonine-protein kinase At4g03230 (Arabidopsis thaliana (Mouse-ear cress)).